We begin with the raw amino-acid sequence, 505 residues long: Calcium/calmodulin-dependent protein kinase kinase 1 (505 aa).

The tract at residues 28 to 66 is disordered; it reads LEEADEGPEPARNGVDPPPRARAASVIPGSASRPTPVRP. Phosphoserine is present on residues Ser-67 and Ser-74. Position 78 is an asymmetric dimethylarginine (Arg-78). The interval 84 to 105 is disordered; the sequence is LGAQVGPYSTGPASHISPRSWR. Ser-100 carries the post-translational modification Phosphoserine. Position 108 is a phosphothreonine (Thr-108). In terms of domain architecture, Protein kinase spans 128 to 409; sequence YKLQSEIGKG…VSDIKLHPWV (282 aa). Residues 134–142 and Lys-157 each bind ATP; that span reads IGKGAYGVV. Positions 167–189 are RP domain; it reads QYGFPRRPPPRGSQATQGGPAKQ. Catalysis depends on Asp-275, which acts as the Proton acceptor. Residues 435–440 form an autoinhibitory domain region; it reads KNSVRL. The tract at residues 438–463 is calmodulin-binding; it reads VRLIPSWTTVILVKSMLRKRSFGNPF. A phosphoserine mark is found at Ser-458, Ser-475, and Ser-492. A disordered region spans residues 460–505; the sequence is GNPFEPQARREERSMSAPGSLLMKEGCGEGCKSPELPGVQEDEAAS.

This sequence belongs to the protein kinase superfamily. Ser/Thr protein kinase family. Interacts with CAMK4 and calmodulin. Post-translationally, appears to be autophosphorylated in a Ca(2+)/calmodulin-dependent manner. Phosphorylated at multiple sites by PRCAKA/PKA. Phosphorylation of Ser-458 is blocked upon binding to Ca(2+)/calmodulin. In vitro, phosphorylated by CAMK1 and CAMK4. Widely expressed. Differentially expressed in various brain regions.

The protein localises to the cytoplasm. It localises to the nucleus. The enzyme catalyses L-seryl-[protein] + ATP = O-phospho-L-seryl-[protein] + ADP + H(+). It catalyses the reaction L-threonyl-[protein] + ATP = O-phospho-L-threonyl-[protein] + ADP + H(+). Its activity is regulated as follows. Activated by Ca(2+)/calmodulin. Binding of calmodulin may relieve intrasteric autoinhibition. Partially inhibited upon phosphorylation by PRCAKA/PKA. May be regulated through phosphorylation by CAMK1 and CAMK4. Calcium/calmodulin-dependent protein kinase that belongs to a proposed calcium-triggered signaling cascade involved in a number of cellular processes. Phosphorylates CAMK1, CAMK1D, CAMK1G and CAMK4. Involved in regulating cell apoptosis. Promotes cell survival by phosphorylating AKT1/PKB that inhibits pro-apoptotic BAD/Bcl2-antagonist of cell death. In Mus musculus (Mouse), this protein is Calcium/calmodulin-dependent protein kinase kinase 1 (Camkk1).